The chain runs to 361 residues: 3-dehydroquinate synthase (361 aa).

NAD(+)-binding positions include 72–77 (SGEKEK), 130–131 (TT), Lys-142, and Lys-151. The Zn(2+) site is built by Glu-184, His-247, and His-264.

This sequence belongs to the sugar phosphate cyclases superfamily. Dehydroquinate synthase family. Co(2+) is required as a cofactor. It depends on Zn(2+) as a cofactor. NAD(+) serves as cofactor.

Its subcellular location is the cytoplasm. The enzyme catalyses 7-phospho-2-dehydro-3-deoxy-D-arabino-heptonate = 3-dehydroquinate + phosphate. It participates in metabolic intermediate biosynthesis; chorismate biosynthesis; chorismate from D-erythrose 4-phosphate and phosphoenolpyruvate: step 2/7. Its function is as follows. Catalyzes the conversion of 3-deoxy-D-arabino-heptulosonate 7-phosphate (DAHP) to dehydroquinate (DHQ). This Bacillus cereus (strain ZK / E33L) protein is 3-dehydroquinate synthase.